Here is a 443-residue protein sequence, read N- to C-terminus: Threonine/serine transporter TdcC (443 aa).

A run of 11 helical transmembrane segments spans residues Thr-22–Ile-42, Ala-44–Phe-64, Gly-97–Val-117, Phe-140–Met-160, Val-163–Ile-183, Ile-207–Ile-227, Met-261–Ala-281, Ala-312–Phe-332, Ile-366–Leu-386, Ile-389–Ile-409, and Asp-423–Phe-443.

Belongs to the amino acid/polyamine transporter 2 family. SdaC/TdcC subfamily.

The protein localises to the cell inner membrane. It catalyses the reaction L-threonine(in) + H(+)(in) = L-threonine(out) + H(+)(out). The catalysed reaction is L-serine(in) + H(+)(in) = L-serine(out) + H(+)(out). Involved in the import of threonine and serine into the cell, with the concomitant import of a proton (symport system). The protein is Threonine/serine transporter TdcC of Escherichia coli O45:K1 (strain S88 / ExPEC).